A 204-amino-acid chain; its full sequence is Inactive ribonuclease-like protein 9 (204 aa).

Positions 1 to 26 (MMRTLITTHPLLLLLLLQQLLQPVQL) are cleaved as a signal peptide. Cystine bridges form between cysteine 97-cysteine 152, cysteine 115-cysteine 167, and cysteine 122-cysteine 129. Residues asparagine 130 and asparagine 142 are each glycosylated (N-linked (GlcNAc...) asparagine).

Belongs to the pancreatic ribonuclease family.

Its subcellular location is the secreted. Does not exhibit any ribonuclease activity. The sequence is that of Inactive ribonuclease-like protein 9 (RNASE9) from Chlorocebus pygerythrus (Vervet monkey).